The primary structure comprises 357 residues: Alanine racemase (357 aa).

Lys-34 acts as the Proton acceptor; specific for D-alanine in catalysis. Lys-34 is subject to N6-(pyridoxal phosphate)lysine. Arg-129 is a binding site for substrate. Tyr-254 acts as the Proton acceptor; specific for L-alanine in catalysis. Met-302 contacts substrate.

It belongs to the alanine racemase family. Requires pyridoxal 5'-phosphate as cofactor.

The catalysed reaction is L-alanine = D-alanine. The protein operates within amino-acid biosynthesis; D-alanine biosynthesis; D-alanine from L-alanine: step 1/1. Its function is as follows. Catalyzes the interconversion of L-alanine and D-alanine. Likely plays an important role in supplying D-alanine, which is an indispensable constituent in the biosynthesis of bacterial cell-wall peptidoglycan. The polypeptide is Alanine racemase (Aeromonas hydrophila subsp. hydrophila (strain ATCC 7966 / DSM 30187 / BCRC 13018 / CCUG 14551 / JCM 1027 / KCTC 2358 / NCIMB 9240 / NCTC 8049)).